Here is a 448-residue protein sequence, read N- to C-terminus: Mitochondrial distribution and morphology protein 10 (448 aa).

Disordered stretches follow at residues 101-126 and 366-386; these read QIHPPLAPESPNESRHAEPNERSEKA and PPLPPSPVKGTSASAVTPAGE. Over residues 112–126 the composition is skewed to basic and acidic residues; it reads NESRHAEPNERSEKA.

It belongs to the MDM10 family. As to quaternary structure, component of the ER-mitochondria encounter structure (ERMES) or MDM complex, composed of MMM1, MDM10, MDM12 and MDM34. Associates with the mitochondrial outer membrane sorting assembly machinery SAM(core) complex.

The protein localises to the mitochondrion outer membrane. Component of the ERMES/MDM complex, which serves as a molecular tether to connect the endoplasmic reticulum and mitochondria. Components of this complex are involved in the control of mitochondrial shape and protein biogenesis and may function in phospholipid exchange. MDM10 is involved in the late assembly steps of the general translocase of the mitochondrial outer membrane (TOM complex). Functions in the TOM40-specific route of the assembly of outer membrane beta-barrel proteins, including the association of TOM40 with the receptor TOM22 and small TOM proteins. Can associate with the SAM(core) complex as well as the MDM12-MMM1 complex, both involved in late steps of the major beta-barrel assembly pathway, that is responsible for biogenesis of all outer membrane beta-barrel proteins. May act as a switch that shuttles between both complexes and channels precursor proteins into the TOM40-specific pathway. Plays a role in mitochondrial morphology and in the inheritance of mitochondria. The chain is Mitochondrial distribution and morphology protein 10 from Coccidioides immitis (strain RS) (Valley fever fungus).